Consider the following 300-residue polypeptide: Acetyl-coenzyme A carboxylase carboxyl transferase subunit beta 2 (300 aa).

Residues 26 to 294 enclose the CoA carboxyltransferase N-terminal domain; sequence VWVKCPSCRE…SGAYSSEAVA (269 aa). Cysteine 30, cysteine 33, cysteine 49, and cysteine 51 together coordinate Zn(2+). The segment at 30-51 adopts a C4-type zinc-finger fold; it reads CPSCRELIYHKQLAERMKVCRC.

This sequence belongs to the AccD/PCCB family. In terms of assembly, acetyl-CoA carboxylase is a heterohexamer composed of biotin carboxyl carrier protein (AccB), biotin carboxylase (AccC) and two subunits each of ACCase subunit alpha (AccA) and ACCase subunit beta (AccD). The cofactor is Zn(2+).

The protein resides in the cytoplasm. The catalysed reaction is N(6)-carboxybiotinyl-L-lysyl-[protein] + acetyl-CoA = N(6)-biotinyl-L-lysyl-[protein] + malonyl-CoA. Its pathway is lipid metabolism; malonyl-CoA biosynthesis; malonyl-CoA from acetyl-CoA: step 1/1. Its function is as follows. Component of the acetyl coenzyme A carboxylase (ACC) complex. Biotin carboxylase (BC) catalyzes the carboxylation of biotin on its carrier protein (BCCP) and then the CO(2) group is transferred by the transcarboxylase to acetyl-CoA to form malonyl-CoA. The protein is Acetyl-coenzyme A carboxylase carboxyl transferase subunit beta 2 of Roseiflexus castenholzii (strain DSM 13941 / HLO8).